The chain runs to 185 residues: Ribosome-recycling factor (185 aa).

This sequence belongs to the RRF family.

Its subcellular location is the cytoplasm. Its function is as follows. Responsible for the release of ribosomes from messenger RNA at the termination of protein biosynthesis. May increase the efficiency of translation by recycling ribosomes from one round of translation to another. This is Ribosome-recycling factor from Geotalea daltonii (strain DSM 22248 / JCM 15807 / FRC-32) (Geobacter daltonii).